The following is a 198-amino-acid chain: Imidazoleglycerol-phosphate dehydratase (198 aa).

This sequence belongs to the imidazoleglycerol-phosphate dehydratase family.

It localises to the cytoplasm. It catalyses the reaction D-erythro-1-(imidazol-4-yl)glycerol 3-phosphate = 3-(imidazol-4-yl)-2-oxopropyl phosphate + H2O. It participates in amino-acid biosynthesis; L-histidine biosynthesis; L-histidine from 5-phospho-alpha-D-ribose 1-diphosphate: step 6/9. The polypeptide is Imidazoleglycerol-phosphate dehydratase (Gluconacetobacter diazotrophicus (strain ATCC 49037 / DSM 5601 / CCUG 37298 / CIP 103539 / LMG 7603 / PAl5)).